We begin with the raw amino-acid sequence, 117 residues long: Large ribosomal subunit protein eL8 (117 aa).

This sequence belongs to the eukaryotic ribosomal protein eL8 family. Part of the 50S ribosomal subunit. Probably part of the RNase P complex.

The protein resides in the cytoplasm. Multifunctional RNA-binding protein that recognizes the K-turn motif in ribosomal RNA, the RNA component of RNase P, box H/ACA, box C/D and box C'/D' sRNAs. This Methanocaldococcus jannaschii (strain ATCC 43067 / DSM 2661 / JAL-1 / JCM 10045 / NBRC 100440) (Methanococcus jannaschii) protein is Large ribosomal subunit protein eL8.